Consider the following 329-residue polypeptide: Interleukin-12 subunit beta (329 aa).

The signal sequence occupies residues 1–22 (MHPQQLVIAWLSLVLLAPPLMA). An Ig-like C2-type domain is found at 23 to 106 (IWELEKNVYV…LSHSFLLIHK (84 aa)). Cysteines 50 and 90 form a disulfide. N-linked (GlcNAc...) asparagine glycans are attached at residues Asn-135 and Asn-223. Positions 238-329 (PPKNLQLKPL…WSNWASVSCS (92 aa)) constitute a Fibronectin type-III domain.

Belongs to the IL-12B family. In terms of assembly, heterodimer with IL12A; disulfide-linked. The heterodimer is known as interleukin IL-12. Heterodimer with IL23A; disulfide-linked. The heterodimer is known as interleukin IL-23. Also secreted as a monomer. Interacts with NBR1; this interaction promotes IL-12 secretion.

The protein localises to the secreted. Its function is as follows. Cytokine that can act as a growth factor for activated T and NK cells, enhance the lytic activity of NK/lymphokine-activated killer cells, and stimulate the production of IFN-gamma by resting PBMC. Functionally, associates with IL23A to form the IL-23 interleukin, a heterodimeric cytokine which functions in innate and adaptive immunity. IL-23 may constitute with IL-17 an acute response to infection in peripheral tissues. IL-23 binds to a heterodimeric receptor complex composed of IL12RB1 and IL23R, activates the Jak-Stat signaling cascade, stimulates memory rather than naive T-cells and promotes production of pro-inflammatory cytokines. IL-23 induces autoimmune inflammation and thus may be responsible for autoimmune inflammatory diseases and may be important for tumorigenesis. The chain is Interleukin-12 subunit beta (IL12B) from Felis catus (Cat).